Reading from the N-terminus, the 256-residue chain is Ribonuclease 3 (256 aa).

The RNase III domain maps to 3 to 125 (LDALQQRLGY…IFGAVFLDGG (123 aa)). Mg(2+) is bound at residue E38. D42 is a catalytic residue. Mg(2+)-binding residues include D111 and E114. E114 is an active-site residue. The 71-residue stretch at 152-222 (DAKTLLQEYL…AKLALDEAHR (71 aa)) folds into the DRBM domain. The disordered stretch occupies residues 226-256 (QLVKRSRAERTGKTRKQATPPDPQLSLRLKE).

This sequence belongs to the ribonuclease III family. As to quaternary structure, homodimer. The cofactor is Mg(2+).

It is found in the cytoplasm. The catalysed reaction is Endonucleolytic cleavage to 5'-phosphomonoester.. Functionally, digests double-stranded RNA. Involved in the processing of primary rRNA transcript to yield the immediate precursors to the large and small rRNAs (23S and 16S). Processes some mRNAs, and tRNAs when they are encoded in the rRNA operon. Processes pre-crRNA and tracrRNA of type II CRISPR loci if present in the organism. In Ralstonia pickettii (strain 12J), this protein is Ribonuclease 3.